Consider the following 483-residue polypeptide: Endoplasmic reticulum lectin 1 (483 aa).

The signal sequence occupies residues 1 to 33; the sequence is MEEGDGGLRSLVPGGPLLLVLYGLLEASGGGRA. MRH domains lie at 111–246 and 342–469; these read SSCS…LCSH and SYCF…ICKI. The cysteines at positions 113 and 126 are disulfide-linked. Asn195 is a glycosylation site (N-linked (GlcNAc...) asparagine). 5 cysteine pairs are disulfide-bonded: Cys199/Cys232, Cys215/Cys244, Cys344/Cys357, Cys421/Cys455, and Cys436/Cys467.

May form a complex with OS9, HSPA5, SYVN1, and SEL1L with which it interacts directly. Interacts (via PRKCSH 2 domain) with KREMEN2 (when glycosylated). Interacts with HSPA5. Post-translationally, N-glycosylated.

The protein localises to the endoplasmic reticulum lumen. Functionally, probable lectin that binds selectively to improperly folded lumenal proteins. May function in endoplasmic reticulum quality control and endoplasmic reticulum-associated degradation (ERAD) of both non-glycosylated proteins and glycoproteins. This Mus musculus (Mouse) protein is Endoplasmic reticulum lectin 1 (Erlec1).